The sequence spans 172 residues: MDNSSIQELQQPLLPSITCDLLAPRSEKPELGTPFPETAFAESPRGWQLLLPPLPSVSAGLGEPETPDFEDTLSSDSDSDDDGGDRLSPLLPHDHLGLAVFSVLCCFWPVGIAAFCLAHKTNKAWAKGDVQGAGAASRRAFLLGVLAVGLGLCTYAAALVTLAAYLASRDPP.

Residues 1–97 (MDNSSIQELQ…SPLLPHDHLG (97 aa)) lie on the Extracellular side of the membrane. Positions 60-86 (GLGEPETPDFEDTLSSDSDSDDDGGDR) are disordered. Acidic residues predominate over residues 65 to 83 (ETPDFEDTLSSDSDSDDDG). A helical membrane pass occupies residues 98-118 (LAVFSVLCCFWPVGIAAFCLA). Topologically, residues 119-139 (HKTNKAWAKGDVQGAGAASRR) are cytoplasmic. Residues 140 to 160 (AFLLGVLAVGLGLCTYAAALV) form a helical membrane-spanning segment. The Extracellular portion of the chain corresponds to 161 to 172 (TLAAYLASRDPP).

It belongs to the CD225/Dispanin family.

Its subcellular location is the membrane. The protein is Transmembrane protein 91 (Tmem91) of Mus musculus (Mouse).